We begin with the raw amino-acid sequence, 341 residues long: Phosphoribosylformylglycinamidine cyclo-ligase (341 aa).

This sequence belongs to the AIR synthase family.

It is found in the cytoplasm. The catalysed reaction is 2-formamido-N(1)-(5-O-phospho-beta-D-ribosyl)acetamidine + ATP = 5-amino-1-(5-phospho-beta-D-ribosyl)imidazole + ADP + phosphate + H(+). It participates in purine metabolism; IMP biosynthesis via de novo pathway; 5-amino-1-(5-phospho-D-ribosyl)imidazole from N(2)-formyl-N(1)-(5-phospho-D-ribosyl)glycinamide: step 2/2. The protein is Phosphoribosylformylglycinamidine cyclo-ligase of Thermosynechococcus vestitus (strain NIES-2133 / IAM M-273 / BP-1).